We begin with the raw amino-acid sequence, 430 residues long: Sphingosine-1-phosphate phosphatase 1 (430 aa).

A disordered region spans residues 34–100; it reads GSPKAGEDAE…PRRAGSLRRN (67 aa). Phosphoserine is present on S101. T103 bears the Phosphothreonine mark. 4 helical membrane-spanning segments follow: residues 121 to 141, 152 to 172, 193 to 213, and 216 to 236; these read FCFG…PFWI, LVII…IIRW, MPST…LLTY, and WQYP…LVCL. Residues 167–175 form a phosphatase sequence motif I region; it reads KDIIRWPRP. Residues 194 to 197 form a phosphatase sequence motif II region; the sequence is PSTH. H197 functions as the Proton donor in the catalytic mechanism. The interval 237 to 248 is phosphatase sequence motif III; it reads SRIYMGMHSILD. Catalysis depends on H244, which acts as the Nucleophile. The next 5 helical transmembrane spans lie at 246–266, 279–299, 311–331, 348–368, and 409–429; these read ILDV…FYPL, YAPL…FTLD, ILGS…LGIS, VTLF…VLFV, and YGTV…FIGI.

The protein belongs to the type 2 lipid phosphate phosphatase family.

The protein resides in the endoplasmic reticulum membrane. The protein localises to the cell membrane. It catalyses the reaction sphinganine 1-phosphate + H2O = sphinganine + phosphate. The enzyme catalyses sphing-4-enine 1-phosphate + H2O = sphing-4-enine + phosphate. In terms of biological role, specifically dephosphorylates sphingosine 1-phosphate (S1P), dihydro-S1P, and phyto-S1P. Does not act on ceramide 1-phosphate, lysophosphatidic acid or phosphatidic acid. Sphingosine-1-phosphate phosphatase activity is needed for efficient recycling of sphingosine into the sphingolipid synthesis pathway. Regulates the intracellular levels of the bioactive sphingolipid metabolite S1P that regulates diverse biological processes acting both as an extracellular receptor ligand or as an intracellular second messenger. Involved in efficient ceramide synthesis from exogenous sphingoid bases. Converts S1P to sphingosine, which is readily metabolized to ceramide via ceramide synthase. In concert with sphingosine kinase 2 (SphK2), recycles sphingosine into ceramide through a phosphorylation/dephosphorylation cycle. Regulates endoplasmic-to-Golgi trafficking of ceramides, resulting in the regulation of ceramide levels in the endoplasmic reticulum, preferentially long-chain ceramide species, and influences the anterograde membrane transport of both ceramide and proteins from the endoplasmic reticulum to the Golgi apparatus. The modulation of intracellular ceramide levels in turn regulates apoptosis. Via S1P levels, modulates resting tone, intracellular Ca(2+) and myogenic vasoconstriction in resistance arteries. Also involved in unfolded protein response (UPR) and ER stress-induced autophagy via regulation of intracellular S1P levels. Involved in the regulation of epidermal homeostasis and keratinocyte differentiation. The protein is Sphingosine-1-phosphate phosphatase 1 of Rattus norvegicus (Rat).